The sequence spans 190 residues: Potassium-transporting ATPase KdpC subunit (190 aa).

A helical transmembrane segment spans residues 10-30 (TFLFLLLITGGVYPLLTTALG).

It belongs to the KdpC family. The system is composed of three essential subunits: KdpA, KdpB and KdpC.

The protein resides in the cell inner membrane. In terms of biological role, part of the high-affinity ATP-driven potassium transport (or Kdp) system, which catalyzes the hydrolysis of ATP coupled with the electrogenic transport of potassium into the cytoplasm. This subunit acts as a catalytic chaperone that increases the ATP-binding affinity of the ATP-hydrolyzing subunit KdpB by the formation of a transient KdpB/KdpC/ATP ternary complex. In Shigella flexneri serotype 5b (strain 8401), this protein is Potassium-transporting ATPase KdpC subunit.